The sequence spans 522 residues: Secreted RxLR effector protein 105 (522 aa).

Positions 1–21 are cleaved as a signal peptide; that stretch reads MRGPCSVITALLVVASSQIAA. The RxLR-dEER signature appears at 48–63; sequence RYLRGSQHVLDSNEER.

Belongs to the RxLR effector family.

Its subcellular location is the secreted. The protein resides in the host nucleus. It localises to the host cytoplasm. Its function is as follows. Secreted effector that dos not suppress the host cell death induced by cell death-inducing proteins. In Plasmopara viticola (Downy mildew of grapevine), this protein is Secreted RxLR effector protein 105.